Here is a 195-residue protein sequence, read N- to C-terminus: Protein LIGHT-DEPENDENT SHORT HYPOCOTYLS 7 (195 aa).

Disordered stretches follow at residues 1–41 (MASH…LSRY) and 154–195 (SQAK…NLAS). Residues 21–36 (QPQPQPHQPQSPPNPP) show a composition bias toward pro residues. The region spanning 40–167 (RYESQKRRDW…ARGVPYKKRK (128 aa)) is the ALOG domain. The span at 162–175 (PYKKRKKRKKRNPM) shows a compositional bias: basic residues. The Nuclear localization signal motif lies at 165–169 (KRKKR). Over residues 184-195 (TTGTSSSSNLAS) the composition is skewed to low complexity.

It belongs to the plant homeotic and developmental regulators ALOG protein family.

Its subcellular location is the nucleus. Its function is as follows. Probable transcription regulator that acts as a developmental regulator by promoting cell growth in response to light. This Arabidopsis thaliana (Mouse-ear cress) protein is Protein LIGHT-DEPENDENT SHORT HYPOCOTYLS 7 (LSH7).